The primary structure comprises 290 residues: Arylamine N-acetyltransferase 2 (290 aa).

Cys-68 acts as the Acyl-thioester intermediate in catalysis. Ser-103 and Gly-104 together coordinate CoA. 106–107 (IH) serves as a coordination point for substrate. Active-site residues include His-107 and Asp-122. CoA is bound at residue Tyr-208.

The protein belongs to the arylamine N-acetyltransferase family.

The protein localises to the cytoplasm. It carries out the reaction an arylamine + acetyl-CoA = an N-acetylarylamine + CoA. The enzyme catalyses an N-hydroxyarylamine + acetyl-CoA = an N-acetoxyarylamine + CoA. Its function is as follows. Catalyzes the N- or O-acetylation of various arylamine and heterocyclic amine substrates, and participates in the detoxification of a plethora of hydrazine and arylamine drugs. This chain is Arylamine N-acetyltransferase 2 (NAT2), found in Mesocricetus auratus (Golden hamster).